The chain runs to 343 residues: Mesaconyl-CoA hydratase (343 aa).

One can recognise a MaoC-like domain in the interval 47-116 (SDEFARACGL…STVIGLKENS (70 aa)). Substrate is bound by residues 60–63 (PVDE), 83–86 (VANL), and 94–96 (LKP).

The enzyme catalyses (2R,3S)-beta-methylmalyl-CoA = 2-methylfumaryl-CoA + H2O. Its function is as follows. Involved in the ethylmalonyl-CoA pathway for acetate assimilation. Catalyzes the reversible hydration of mesaconyl-CoA (2-methylfumaryl-CoA) to yield beta-methylmalyl-CoA ((2R,3S)-beta-methylmalyl-CoA). The sequence is that of Mesaconyl-CoA hydratase (mch) from Cereibacter sphaeroides (strain ATCC 17023 / DSM 158 / JCM 6121 / CCUG 31486 / LMG 2827 / NBRC 12203 / NCIMB 8253 / ATH 2.4.1.) (Rhodobacter sphaeroides).